Here is a 306-residue protein sequence, read N- to C-terminus: Protoheme IX farnesyltransferase (306 aa).

The next 8 helical transmembrane spans lie at 31–50 (VIEL…QGGW), 55–77 (LILG…NCYI), 104–124 (LVFA…ISNW), 125–145 (LAAA…TLWL), 168–188 (WAAV…IVFL), 218–235 (GRAA…ATLA), 238–258 (LLLI…LAGG), and 286–306 (ASIS…LLPF).

The protein belongs to the UbiA prenyltransferase family. Protoheme IX farnesyltransferase subfamily.

The protein resides in the cell membrane. It carries out the reaction heme b + (2E,6E)-farnesyl diphosphate + H2O = Fe(II)-heme o + diphosphate. Its pathway is porphyrin-containing compound metabolism; heme O biosynthesis; heme O from protoheme: step 1/1. In terms of biological role, converts heme B (protoheme IX) to heme O by substitution of the vinyl group on carbon 2 of heme B porphyrin ring with a hydroxyethyl farnesyl side group. This chain is Protoheme IX farnesyltransferase, found in Clavibacter sepedonicus (Clavibacter michiganensis subsp. sepedonicus).